A 1031-amino-acid chain; its full sequence is Pre-mRNA-splicing factor SYF1 (1031 aa).

HAT repeat units follow at residues 28 to 60, 90 to 122, 214 to 248, and 250 to 269; these read HLIP…NVKE, DGLQ…TRQS, KNGS…WAEI, and GGDA…PSLT. Positions 346 to 368 are disordered; that stretch reads VEEKVDGEQPQVEGQEQQPQEEP. Low complexity predominate over residues 353-368; that stretch reads EQPQVEGQEQQPQEEP. HAT repeat units follow at residues 452-487, 610-646, 664-698, 700-732, 734-768, 773-807, 845-879, and 881-915; these read GEFE…FSET, PDLE…MELR, PKNT…LEES, GTVE…FLEE, KYFE…KFVK, KKLE…LEEE, FGLP…MERK, and GEID…FEIE. 2 disordered regions span residues 948–969 and 1003–1031; these read AAAS…QDAA and TNAN…EDEF.

This sequence belongs to the crooked-neck family. As to quaternary structure, associated with the spliceosome.

It is found in the nucleus. Involved in pre-mRNA splicing and cell cycle progression. This chain is Pre-mRNA-splicing factor SYF1 (SYF1), found in Cryptococcus neoformans var. neoformans serotype D (strain B-3501A) (Filobasidiella neoformans).